The primary structure comprises 305 residues: NAD kinase 2 (305 aa).

The active-site Proton acceptor is Asp78. NAD(+) contacts are provided by residues 78–79 (DG), 152–153 (NE), Asp182, 193–198 (TAYSLS), and Asn251.

Belongs to the NAD kinase family. The cofactor is a divalent metal cation.

Its subcellular location is the cytoplasm. It catalyses the reaction NAD(+) + ATP = ADP + NADP(+) + H(+). Its function is as follows. Involved in the regulation of the intracellular balance of NAD and NADP, and is a key enzyme in the biosynthesis of NADP. Catalyzes specifically the phosphorylation on 2'-hydroxyl of the adenosine moiety of NAD to yield NADP. Functions as a growth repressor under light-activated heterotrophic growth conditions and light and dark cycle conditions in the presence of glucose. NADP(H)/NAD(H) maintenance by slr0400 probably plays a significant role in modulating glycolysis and the TCA cycle to repress the growth rate and maintain the photosynthetic capacity. The chain is NAD kinase 2 from Synechocystis sp. (strain ATCC 27184 / PCC 6803 / Kazusa).